The following is a 250-amino-acid chain: Putative inner dynein arm light chain, axonemal (250 aa).

Positions 168 to 250 (MRKALQAHEE…QLEGITAPKK (83 aa)) form a coiled coil.

This sequence belongs to the inner dynein arm light chain family.

It localises to the cell projection. It is found in the cilium. The protein resides in the dynein axonemal particle. Its function is as follows. May play a dynamic role in flagellar motility. In Drosophila melanogaster (Fruit fly), this protein is Putative inner dynein arm light chain, axonemal.